A 409-amino-acid polypeptide reads, in one-letter code: UV excision repair protein RAD23 homolog B (409 aa).

The 79-residue stretch at 1 to 79 (MQVTLKTLQQ…VVVMVTKPKA (79 aa)) folds into the Ubiquitin-like domain. The interval 80-175 (VSTPAPATTQ…STSGDSSRSN (96 aa)) is disordered. Residues 81–143 (STPAPATTQQ…SSEPAPASAA (63 aa)) are compositionally biased toward low complexity. The span at 144 to 153 (KQEKPAEKPA) shows a compositional bias: basic and acidic residues. Position 155 is a phosphothreonine (Thr-155). Residue Ser-160 is modified to Phosphoserine. The span at 160–175 (SPTATDSTSGDSSRSN) shows a compositional bias: polar residues. The residue at position 164 (Thr-164) is a Phosphothreonine. Phosphoserine is present on Ser-174. Thr-186 is modified (phosphothreonine). The UBA 1 domain occupies 188–228 (QSYENMVTEIMSMGYEREQVIAALRASFNNPDRAVEYLLMG). Ser-199 carries the phosphoserine modification. Tyr-202 carries the post-translational modification Phosphotyrosine. The interval 236-276 (QAVVDPPQAASTGAPQSSAVAAAAATTTATTTTTSSGGHPL) is disordered. The segment covering 252–271 (SSAVAAAAATTTATTTTTSS) has biased composition (low complexity). The STI1 domain maps to 274–317 (HPLEFLRNQPQFQQMRQIIQQNPSLLPALLQQIGRENPQLLQQI). Residues 364 to 404 (PQEKEAIERLKALGFPEGLVIQAYFACEKNENLAANFLLQQ) form the UBA 2 domain.

It belongs to the RAD23 family. As to quaternary structure, component of the XPC complex composed of XPC, RAD23B and CETN2. Interacts with NGLY1 and PSMC1. Interacts with ATXN3. Interacts with PSMD4 and PSMC5. Interacts with AMFR. Interacts with VCP; the interaction is indirect and mediated by NGLY1.

It localises to the nucleus. The protein resides in the cytoplasm. Functionally, multiubiquitin chain receptor involved in modulation of proteasomal degradation. Binds to polyubiquitin chains. Proposed to be capable to bind simultaneously to the 26S proteasome and to polyubiquitinated substrates and to deliver ubiquitinated proteins to the proteasome. May play a role in endoplasmic reticulum-associated degradation (ERAD) of misfolded glycoproteins by association with PNGase and delivering deglycosylated proteins to the proteasome. Involved in global genome nucleotide excision repair (GG-NER) by acting as component of the XPC complex. Cooperatively with CETN2 appears to stabilize XPC. May protect XPC from proteasomal degradation. Its function is as follows. The XPC complex is proposed to represent the first factor bound at the sites of DNA damage and together with other core recognition factors, XPA, RPA and the TFIIH complex, is part of the pre-incision (or initial recognition) complex. The XPC complex recognizes a wide spectrum of damaged DNA characterized by distortions of the DNA helix such as single-stranded loops, mismatched bubbles or single-stranded overhangs. The orientation of XPC complex binding appears to be crucial for inducing a productive NER. XPC complex is proposed to recognize and to interact with unpaired bases on the undamaged DNA strand which is followed by recruitment of the TFIIH complex and subsequent scanning for lesions in the opposite strand in a 5'-to-3' direction by the NER machinery. Cyclobutane pyrimidine dimers (CPDs) which are formed upon UV-induced DNA damage esacpe detection by the XPC complex due to a low degree of structural perurbation. Instead they are detected by the UV-DDB complex which in turn recruits and cooperates with the XPC complex in the respective DNA repair. In vitro, the XPC:RAD23B dimer is sufficient to initiate NER; it preferentially binds to cisplatin and UV-damaged double-stranded DNA and also binds to a variety of chemically and structurally diverse DNA adducts. XPC:RAD23B contacts DNA both 5' and 3' of a cisplatin lesion with a preference for the 5' side. XPC:RAD23B induces a bend in DNA upon binding. XPC:RAD23B stimulates the activity of DNA glycosylases TDG and SMUG1. This Homo sapiens (Human) protein is UV excision repair protein RAD23 homolog B (RAD23B).